The primary structure comprises 57 residues: Small ribosomal subunit protein bS21 (57 aa).

The tract at residues 31-57 is disordered; the sequence is EVRKRKHYEKPSVRRKKKSEAARKRKF. Residues 33-57 are compositionally biased toward basic residues; the sequence is RKRKHYEKPSVRRKKKSEAARKRKF.

Belongs to the bacterial ribosomal protein bS21 family.

This chain is Small ribosomal subunit protein bS21 (rpsU), found in Halalkalibacterium halodurans (strain ATCC BAA-125 / DSM 18197 / FERM 7344 / JCM 9153 / C-125) (Bacillus halodurans).